A 227-amino-acid chain; its full sequence is MEQPVGQPAYVLHSRAYKETSALVDFFTPQGRMRAVLRRARSKGGSLVRPFVSLEVELRGRGELKNVSRMDSTGIAAWLHGDALFSGLYLNELLMRLLPAEAPFPTIFEHYTLTLQALAEGRPLEPLLRSFEWRLLDELGYAFSLNQDVNDQPIAADGLYRLRVDAGLERVELLQPGLFRGIELLALAEADWDAPGALLAAKRLMRQALAVHLGAKPLVSRELFRKR.

It belongs to the RecO family.

Its function is as follows. Involved in DNA repair and RecF pathway recombination. The chain is DNA repair protein RecO from Pseudomonas putida (strain ATCC 47054 / DSM 6125 / CFBP 8728 / NCIMB 11950 / KT2440).